The sequence spans 191 residues: Small ribosomal subunit protein bS6 (191 aa).

A disordered region spans residues 168 to 191; that stretch reads KVNLTRKPTPNKSSENKQKVEKQA. Residues 181–191 are compositionally biased toward basic and acidic residues; sequence SENKQKVEKQA.

The protein belongs to the bacterial ribosomal protein bS6 family.

In terms of biological role, binds together with bS18 to 16S ribosomal RNA. This Mycoplasmoides gallisepticum (strain R(low / passage 15 / clone 2)) (Mycoplasma gallisepticum) protein is Small ribosomal subunit protein bS6.